The following is a 71-amino-acid chain: Small ribosomal subunit protein bS21 (71 aa).

The protein belongs to the bacterial ribosomal protein bS21 family.

This chain is Small ribosomal subunit protein bS21, found in Buchnera aphidicola subsp. Baizongia pistaciae (strain Bp).